Here is a 283-residue protein sequence, read N- to C-terminus: Aspartate dehydrogenase domain-containing protein (283 aa).

A phosphoserine mark is found at Ser-20 and Ser-168.

Belongs to the L-aspartate dehydrogenase family.

The sequence is that of Aspartate dehydrogenase domain-containing protein from Homo sapiens (Human).